Here is a 334-residue protein sequence, read N- to C-terminus: Biotin synthase (334 aa).

In terms of domain architecture, Radical SAM core spans 54 to 281 (QAIQLSTLLS…KSYVRLSAGR (228 aa)). 3 residues coordinate [4Fe-4S] cluster: C69, C73, and C76. C113, C144, C204, and R276 together coordinate [2Fe-2S] cluster.

This sequence belongs to the radical SAM superfamily. Biotin synthase family. In terms of assembly, homodimer. [4Fe-4S] cluster serves as cofactor. The cofactor is [2Fe-2S] cluster.

It carries out the reaction (4R,5S)-dethiobiotin + (sulfur carrier)-SH + 2 reduced [2Fe-2S]-[ferredoxin] + 2 S-adenosyl-L-methionine = (sulfur carrier)-H + biotin + 2 5'-deoxyadenosine + 2 L-methionine + 2 oxidized [2Fe-2S]-[ferredoxin]. It functions in the pathway cofactor biosynthesis; biotin biosynthesis; biotin from 7,8-diaminononanoate: step 2/2. Catalyzes the conversion of dethiobiotin (DTB) to biotin by the insertion of a sulfur atom into dethiobiotin via a radical-based mechanism. The chain is Biotin synthase from Haemophilus ducreyi (strain 35000HP / ATCC 700724).